The following is a 454-amino-acid chain: Bifunctional protein GlmU (454 aa).

The tract at residues 1–226 (MLAVAVLAAG…PDEVNGINNR (226 aa)) is pyrophosphorylase. UDP-N-acetyl-alpha-D-glucosamine-binding positions include 7–10 (LAAG), lysine 21, glutamine 73, and 78–79 (GT). Mg(2+) is bound at residue aspartate 103. UDP-N-acetyl-alpha-D-glucosamine is bound by residues glycine 140, glutamate 155, asparagine 170, and asparagine 224. Mg(2+) is bound at residue asparagine 224. The interval 227–247 (RQLAQCEGVLQQRLRDHWMDE) is linker. The segment at 248–454 (GVTFVDPASC…WDRNTQAAQS (207 aa)) is N-acetyltransferase. The UDP-N-acetyl-alpha-D-glucosamine site is built by arginine 329 and lysine 347. The active-site Proton acceptor is the histidine 359. UDP-N-acetyl-alpha-D-glucosamine-binding residues include tyrosine 362 and asparagine 373. Alanine 376, alanine 419, and arginine 436 together coordinate acetyl-CoA.

The protein in the N-terminal section; belongs to the N-acetylglucosamine-1-phosphate uridyltransferase family. This sequence in the C-terminal section; belongs to the transferase hexapeptide repeat family. As to quaternary structure, homotrimer. Mg(2+) serves as cofactor.

The protein resides in the cytoplasm. The enzyme catalyses alpha-D-glucosamine 1-phosphate + acetyl-CoA = N-acetyl-alpha-D-glucosamine 1-phosphate + CoA + H(+). It carries out the reaction N-acetyl-alpha-D-glucosamine 1-phosphate + UTP + H(+) = UDP-N-acetyl-alpha-D-glucosamine + diphosphate. It participates in nucleotide-sugar biosynthesis; UDP-N-acetyl-alpha-D-glucosamine biosynthesis; N-acetyl-alpha-D-glucosamine 1-phosphate from alpha-D-glucosamine 6-phosphate (route II): step 2/2. Its pathway is nucleotide-sugar biosynthesis; UDP-N-acetyl-alpha-D-glucosamine biosynthesis; UDP-N-acetyl-alpha-D-glucosamine from N-acetyl-alpha-D-glucosamine 1-phosphate: step 1/1. The protein operates within bacterial outer membrane biogenesis; LPS lipid A biosynthesis. Functionally, catalyzes the last two sequential reactions in the de novo biosynthetic pathway for UDP-N-acetylglucosamine (UDP-GlcNAc). The C-terminal domain catalyzes the transfer of acetyl group from acetyl coenzyme A to glucosamine-1-phosphate (GlcN-1-P) to produce N-acetylglucosamine-1-phosphate (GlcNAc-1-P), which is converted into UDP-GlcNAc by the transfer of uridine 5-monophosphate (from uridine 5-triphosphate), a reaction catalyzed by the N-terminal domain. In Synechococcus sp. (strain CC9311), this protein is Bifunctional protein GlmU.